The primary structure comprises 333 residues: DNA-directed RNA polymerase subunit alpha (333 aa).

The interval 1–239 (MSAVLDKGSL…TQARCFLNIA (239 aa)) is alpha N-terminal domain (alpha-NTD). The interval 259-333 (DASDLLSARI…SLGMNLDSHG (75 aa)) is alpha C-terminal domain (alpha-CTD).

This sequence belongs to the RNA polymerase alpha chain family. Homodimer. The RNAP catalytic core consists of 2 alpha, 1 beta, 1 beta' and 1 omega subunit. When a sigma factor is associated with the core the holoenzyme is formed, which can initiate transcription.

It catalyses the reaction RNA(n) + a ribonucleoside 5'-triphosphate = RNA(n+1) + diphosphate. Its function is as follows. DNA-dependent RNA polymerase catalyzes the transcription of DNA into RNA using the four ribonucleoside triphosphates as substrates. The chain is DNA-directed RNA polymerase subunit alpha from Neorickettsia sennetsu (strain ATCC VR-367 / Miyayama) (Ehrlichia sennetsu).